We begin with the raw amino-acid sequence, 79 residues long: MGGWSSPSHWLIILLIVVLLFGAKKIPELAKGLGKGIKTFKDEMNNDDEVAKNTQKIEENKNTTNNTSADASIDKTKKA.

A helical membrane pass occupies residues Met1–Phe21. Basic and acidic residues predominate over residues Lys52–Lys61. Residues Lys52–Ala79 are disordered.

It belongs to the TatA/E family. In terms of assembly, the Tat system comprises two distinct complexes: a TatABC complex, containing multiple copies of TatA, TatB and TatC subunits, and a separate TatA complex, containing only TatA subunits. Substrates initially bind to the TatABC complex, which probably triggers association of the separate TatA complex to form the active translocon.

The protein resides in the cell inner membrane. Part of the twin-arginine translocation (Tat) system that transports large folded proteins containing a characteristic twin-arginine motif in their signal peptide across membranes. TatA could form the protein-conducting channel of the Tat system. The chain is Sec-independent protein translocase protein TatA from Campylobacter jejuni subsp. jejuni serotype O:6 (strain 81116 / NCTC 11828).